The chain runs to 132 residues: Putative RNase AF_2433 (132 aa).

Active-site residues include arginine 90 and histidine 95. An RX(4)HXY motif motif is present at residues 90-97 (RNWLVHRY). Tyrosine 97 carries the post-translational modification O-di-AMP-tyrosine.

The protein belongs to the HepT RNase toxin family. In terms of assembly, homodimer, probably forms a complex with cognate antitoxin AF_2432. Modified by cognate antitoxin AF_2432; probably at least 2 successive AMPylation events occur on Tyr-97.

Functionally, probable toxic component of a putative type VII toxin-antitoxin (TA) system, probably an RNase. Probably neutralized by cognate antitoxin AF_2432. Neutralization may be due to AMPylation by AF_2432. In Archaeoglobus fulgidus (strain ATCC 49558 / DSM 4304 / JCM 9628 / NBRC 100126 / VC-16), this protein is Putative RNase AF_2433.